The following is a 103-amino-acid chain: Large ribosomal subunit protein bL21 (103 aa).

It belongs to the bacterial ribosomal protein bL21 family. Part of the 50S ribosomal subunit. Contacts protein L20.

This protein binds to 23S rRNA in the presence of protein L20. The polypeptide is Large ribosomal subunit protein bL21 (Borreliella burgdorferi (strain ZS7) (Borrelia burgdorferi)).